The chain runs to 507 residues: Protein DETOXIFICATION 39 (507 aa).

Helical transmembrane passes span 58 to 78, 92 to 112, 141 to 161, 178 to 198, 209 to 229, 233 to 253, 287 to 307, 318 to 338, 359 to 379, 403 to 423, 433 to 453, and 459 to 479; these read VLFRLALPAILIYLVNSGMGI, LAAASIGNSCFNLVYGLMLGM, IVLALVGLPMTLLYTFSYPIL, IAGLIPQIFAYAVNFTAQKFL, FISAAALILQILLTWITVYVM, FMGIAYVLTISWWVIVGSQCF, AVMICLEMWYSQILVLLAGLL, SICMSISALSFMVSVGFNAAV, WTATFVSFVISVTEALAVIWF, FLAITIILNGIQPVLSGVAVG, VNVGCYYVVGIPVGCILGFTF, and GIWTGMIGGTLMQTLILLYVT.

The protein belongs to the multi antimicrobial extrusion (MATE) (TC 2.A.66.1) family.

The protein resides in the membrane. The sequence is that of Protein DETOXIFICATION 39 from Arabidopsis thaliana (Mouse-ear cress).